The primary structure comprises 390 residues: GTPase Obg (390 aa).

The Obg domain maps to 1 to 159 (MKFVDEAVIR…RHLRLELLLL (159 aa)). Residues 22 to 42 (SFRTEKYVPRGGPDGGDGGDG) form a disordered region. Gly residues predominate over residues 33 to 42 (GPDGGDGGDG). The region spanning 160-333 (ADVGMLGLPN…LTYNLMTTIE (174 aa)) is the OBG-type G domain. GTP-binding positions include 166-173 (GLPNAGKS), 191-195 (FTTLI), 213-216 (DIPG), 283-286 (NKVD), and 314-316 (SAL). Residues Ser173 and Thr193 each contribute to the Mg(2+) site.

Belongs to the TRAFAC class OBG-HflX-like GTPase superfamily. OBG GTPase family. In terms of assembly, monomer. Mg(2+) is required as a cofactor.

It is found in the cytoplasm. Functionally, an essential GTPase which binds GTP, GDP and possibly (p)ppGpp with moderate affinity, with high nucleotide exchange rates and a fairly low GTP hydrolysis rate. Plays a role in control of the cell cycle, stress response, ribosome biogenesis and in those bacteria that undergo differentiation, in morphogenesis control. In Photobacterium profundum (strain SS9), this protein is GTPase Obg.